The chain runs to 482 residues: Adenylosuccinate lyase (482 aa).

Residues 14–15, 82–84, and 108–109 contribute to the substrate site; these read RY, RHD, and TS. His156 serves as the catalytic Proton donor/acceptor. Lys196 participates in a covalent cross-link: Glycyl lysine isopeptide (Lys-Gly) (interchain with G-Cter in ubiquitin). Gln238 is a binding site for substrate. Catalysis depends on Ser286, which acts as the Proton donor/acceptor. Arg300, Arg326, Ser331, and Arg335 together coordinate substrate.

The protein belongs to the lyase 1 family. Adenylosuccinate lyase subfamily. Homotetramer. Residues from neighboring subunits contribute catalytic and substrate-binding residues to each active site.

The enzyme catalyses N(6)-(1,2-dicarboxyethyl)-AMP = fumarate + AMP. It catalyses the reaction (2S)-2-[5-amino-1-(5-phospho-beta-D-ribosyl)imidazole-4-carboxamido]succinate = 5-amino-1-(5-phospho-beta-D-ribosyl)imidazole-4-carboxamide + fumarate. It functions in the pathway purine metabolism; AMP biosynthesis via de novo pathway; AMP from IMP: step 2/2. Its pathway is purine metabolism; IMP biosynthesis via de novo pathway; 5-amino-1-(5-phospho-D-ribosyl)imidazole-4-carboxamide from 5-amino-1-(5-phospho-D-ribosyl)imidazole-4-carboxylate: step 2/2. The chain is Adenylosuccinate lyase (ADE13) from Saccharomyces cerevisiae (strain ATCC 204508 / S288c) (Baker's yeast).